Reading from the N-terminus, the 527-residue chain is UPF0053 protein YegH (527 aa).

7 helical membrane-spanning segments follow: residues 14–34 (ITLI…IAIL), 51–71 (LLLA…LVTL), 81–101 (FTFS…LFKA), 122–142 (GAKF…FSLD), 145–165 (ITAV…VIAI), 185–205 (IVIL…AEGF), and 207–227 (FVIP…IEAL). CBS domains follow at residues 306-366 (MTSR…GEPL) and 371-429 (LIRQ…PNEV).

It belongs to the UPF0053 family.

Its subcellular location is the cell membrane. The protein is UPF0053 protein YegH (yegH) of Shigella flexneri.